We begin with the raw amino-acid sequence, 209 residues long: MEGGGGSSNKSTGGLAGFFGAGGAGYSNADLAGVPLTGMNPLSPYLNVDPRYLVQDTDEFILPTGANKTRGRFELAFFTIGGCCMTGAAFGALNGLRLGLKETQSMPWSKPRNVQILNMVTRQGALWANTLGSLALLYSAFGVIIEKTRGAEDDFNTVAAGTMTGMLYKCTGGLRGIARGGLAGLTLTSVYALYNNWEHMKGSLLQQSL.

Helical transmembrane passes span 73-93 (FELA…FGAL), 125-145 (ALWA…GVII), and 181-197 (GLAG…YNNW).

Belongs to the Tim17/Tim22/Tim23 family. Component of the TIM23 complex at least composed of TIMM23, TIMM17 (TIMM17A or TIMM17B) and TIMM50; within this complex, directly interacts with TIMM50. The complex interacts with the TIMM44 component of the PAM complex and with DNAJC15. Upon mitochondrial depolarization, interacts with PINK1; the interaction is required for PINK1 accumulation at the outer mitochondrial membrane, kinase activation by autophosphorylation and PRKN recruitement to mitochondria.

The protein localises to the mitochondrion inner membrane. Essential component of the TIM23 complex, a complex that mediates the translocation of transit peptide-containing proteins across the mitochondrial inner membrane. Has a role in the activation of stress-induced mitophagy by protecting PINK1 from OMA1-mediated degradation and facilitating its accumulation at the outer mitochondrial membrane in response to depolarization. The sequence is that of Mitochondrial import inner membrane translocase subunit Tim23 (Timm23) from Rattus norvegicus (Rat).